The primary structure comprises 261 residues: uncharacterized protein (261 aa).

Residues Asp43, His45, Asp75, Asn106, His197, and His199 each coordinate a divalent metal cation.

This sequence belongs to the metallophosphoesterase superfamily. It depends on a divalent metal cation as a cofactor.

This is an uncharacterized protein from Aquifex aeolicus (strain VF5).